Reading from the N-terminus, the 378-residue chain is Putative UDP-N-acetylglucosamine 2-epimerase (378 aa).

It belongs to the UDP-N-acetylglucosamine 2-epimerase family.

The protein resides in the cytoplasm. It catalyses the reaction UDP-N-acetyl-alpha-D-glucosamine = UDP-N-acetyl-alpha-D-mannosamine. The protein is Putative UDP-N-acetylglucosamine 2-epimerase of Thermotoga maritima (strain ATCC 43589 / DSM 3109 / JCM 10099 / NBRC 100826 / MSB8).